Reading from the N-terminus, the 118-residue chain is Eukaryotic translation initiation factor 4E-binding protein 1 (118 aa).

Serine 2 is subject to N-acetylserine. Residues 27-48 (VQLPPGDYSTTPGGTLFSTTPG) are disordered. A compositionally biased stretch (polar residues) spans 34 to 48 (YSTTPGGTLFSTTPG). The residue at position 37 (threonine 37) is a Phosphothreonine; by MTOR. Threonine 41 is modified (phosphothreonine). Serine 44 is modified (phosphoserine). The residue at position 46 (threonine 46) is a Phosphothreonine; by MTOR. Residue threonine 50 is modified to Phosphothreonine. At tyrosine 54 the chain carries Phosphotyrosine. Positions 54 to 60 (YDRKFLM) match the YXXXXLphi motif motif. Lysine 57 participates in a covalent cross-link: Glycyl lysine isopeptide (Lys-Gly) (interchain with G-Cter in ubiquitin). Positions 64–118 (NSPVTKTPPRDLPTIPGVTSPTGDEPPTEARQNHLRSSPEDKPAGGEESQFEMDI) are disordered. Serine 65 carries the post-translational modification Phosphoserine; by DYRK2, MAPK1, MAPK3 and MTOR. Threonine 70 bears the Phosphothreonine; by MTOR mark. A Phosphothreonine modification is found at threonine 77. 2 positions are modified to phosphoserine: serine 83 and serine 100. Serine 101 is modified (phosphoserine; by DYRK2). At serine 112 the chain carries Phosphoserine. The TOS motif signature appears at 114 to 118 (FEMDI).

Belongs to the eIF4E-binding protein family. Hypophosphorylated EIF4EBP1 competes with EIF4G1/EIF4G3 to interact with EIF4E; insulin stimulated MAP-kinase (MAPK1 and MAPK3) or mTORC1 phosphorylation of EIF4EBP1 causes dissociation of the complex allowing EIF4G1/EIF4G3 to bind and consequent initiation of translation. Interacts (via TOS motif) with RPTOR; promoting phosphorylation by mTORC1. Post-translationally, phosphorylated on serine and threonine residues in response to insulin, EGF and PDGF. Phosphorylation at Thr-37, Thr-46, Ser-65 and Thr-70, corresponding to the hyperphosphorylated form, is regulated by mTORC1 and abolishes binding to EIF4E. In terms of processing, ubiquitinated: when eIF4E levels are low, hypophosphorylated form is ubiquitinated by the BCR(KLHL25) complex, leading to its degradation and serving as a homeostatic mechanism to maintain translation and prevent eIF4E inhibition when eIF4E levels are low. Not ubiquitinated when hyperphosphorylated (at Thr-37, Thr-46, Ser-65 and Thr-70) or associated with eIF4E.

The protein resides in the cytoplasm. It is found in the nucleus. In terms of biological role, repressor of translation initiation that regulates EIF4E activity by preventing its assembly into the eIF4F complex: hypophosphorylated form competes with EIF4G1/EIF4G3 and strongly binds to EIF4E, leading to repress translation. In contrast, hyperphosphorylated form dissociates from EIF4E, allowing interaction between EIF4G1/EIF4G3 and EIF4E, leading to initiation of translation. Mediates the regulation of protein translation by hormones, growth factors and other stimuli that signal through the MAP kinase and mTORC1 pathways. The protein is Eukaryotic translation initiation factor 4E-binding protein 1 (EIF4EBP1) of Bos taurus (Bovine).